We begin with the raw amino-acid sequence, 287 residues long: Putative syntaxin-4 (287 aa).

Residues 1 to 262 (MHQISGINAA…NRKWKIVTCI (262 aa)) are Cytoplasmic-facing. A coiled-coil region spans residues 65–97 (KCRKLNDHVDKFIAQARGIRRRLADASEELVQY). A t-SNARE coiled-coil homology domain is found at 184 to 246 (FDDMKNRATD…EQAQQNVRQA (63 aa)). The chain crosses the membrane as a helical; Anchor for type IV membrane protein span at residues 263–283 (ALIVLLLVVVYLLSHFLGAII). At 284–287 (PGWK) the chain is on the extracellular side.

It belongs to the syntaxin family.

It localises to the membrane. Potentially involved in docking of synaptic vesicles at presynaptic active zones. The sequence is that of Putative syntaxin-4 (syx-4) from Caenorhabditis elegans.